We begin with the raw amino-acid sequence, 220 residues long: Splicing factor U2AF 26 kDa subunit (220 aa).

N-acetylalanine is present on A2. Residues 12 to 40 (EKDKVNCSFYFKIGACRHGDRCSRLHNKP) form a C3H1-type 1 zinc finger. An RRM domain is found at 65–147 (SHCHVSDVEV…QAVHAELSPV (83 aa)). The C3H1-type 2 zinc finger occupies 149 to 176 (DFRESCCRQYEMGECTRGGFCNFMHLRP). The interval 186 to 220 (YGRGPRHRSPPRSHTGHRPRERNRRRSPDHRHGRF) is disordered. A compositionally biased stretch (basic residues) spans 189 to 220 (GPRHRSPPRSHTGHRPRERNRRRSPDHRHGRF).

Belongs to the splicing factor SR family. Interacts with GFI1, U2AF2 and C1QBP. Isoform 3 interacts with PER1. Post-translationally, isoform 3 is rapidly degraded by a proteasome-mediated degradation pathway. As to expression, ubiquitous. Highly expressed in the brain.

The protein localises to the nucleus. It is found in the nucleus speckle. The protein resides in the cytoplasm. Functionally, RNA-binding protein that function as a pre-mRNA splicing factor. Plays a critical role in both constitutive and enhancer-dependent splicing by mediating protein-protein interactions and protein-RNA interactions required for accurate 3'-splice site selection. It can functionally substitute for U2AF1 in constitutive splicing and enhancer-dependent splicing. Acts by enhancing the binding of U2AF2 to weak pyrimidine tracts. Also participates in the regulation of alternative pre-mRNA splicing. Activates exon 5 skipping of PTPRC during T-cell activation; an event reversed by GFI1. Binds to RNA at the AG dinucleotide at the 3'-splice site. Shows a preference for AGC or AGA. Alternative splicing of U2AF1L4 may play a role in connecting the circadian rhythm to changing external cues: may provide a circadian buffering system in central and periphery clocks that allows synchronized adaption to clock-resetting stimuli in order to prevent potentially pathogenic desynchronization. The sequence is that of Splicing factor U2AF 26 kDa subunit (U2af1l4) from Mus musculus (Mouse).